Consider the following 800-residue polypeptide: DNA topoisomerase 4 subunit A (800 aa).

A Topo IIA-type catalytic domain is found at 31-495 (LPDVRDGLKP…EIEEIKIDKE (465 aa)). Tyr-119 serves as the catalytic O-(5'-phospho-DNA)-tyrosine intermediate.

Belongs to the type II topoisomerase GyrA/ParC subunit family. ParC type 2 subfamily. As to quaternary structure, heterotetramer composed of ParC and ParE.

The protein localises to the cell membrane. The enzyme catalyses ATP-dependent breakage, passage and rejoining of double-stranded DNA.. Its function is as follows. Topoisomerase IV is essential for chromosome segregation. It relaxes supercoiled DNA. Performs the decatenation events required during the replication of a circular DNA molecule. This Staphylococcus aureus (strain MW2) protein is DNA topoisomerase 4 subunit A.